Consider the following 277-residue polypeptide: Cell division protein ZipA (277 aa).

At 1 to 5 (MQDLR) the chain is on the periplasmic side. A helical transmembrane segment spans residues 6–26 (LMLLLFGVITIIVLFLHGVWA). Over 27–277 (RRKERSALFY…NALIRSTPHL (251 aa)) the chain is Cytoplasmic. Residues 120-139 (QKKSDDLSHQSKETHHPSIQ) are disordered.

The protein belongs to the ZipA family. As to quaternary structure, interacts with FtsZ via their C-terminal domains.

It is found in the cell inner membrane. Functionally, essential cell division protein that stabilizes the FtsZ protofilaments by cross-linking them and that serves as a cytoplasmic membrane anchor for the Z ring. Also required for the recruitment to the septal ring of downstream cell division proteins. This chain is Cell division protein ZipA, found in Hamiltonella defensa subsp. Acyrthosiphon pisum (strain 5AT).